Reading from the N-terminus, the 466-residue chain is Voltage-gated potassium channel regulatory subunit KCNG2 (466 aa).

At 1 to 174 (MEPWPCSPGG…DVVDNPHSGL (174 aa)) the chain is on the cytoplasmic side. The tract at residues 131–155 (AEARAGPTERGAQGSPARALGPRGR) is disordered. A helical transmembrane segment spans residues 175–196 (AGKLFACVSVSFVAVTAVGLCL). The Extracellular segment spans residues 197–217 (STMPDIRAEEERGECSPKCRS). Residues 218 to 239 (LFVLETVCVAWFSFEFLLRSLQ) traverse the membrane as a helical segment. The Cytoplasmic segment spans residues 240–250 (AESKCAFLRAP). The chain crosses the membrane as a helical span at residues 251-271 (LNIIDILALLPFYVSLLLGLA). Topologically, residues 272 to 283 (AGPGGTKLLERA) are extracellular. A helical; Voltage-sensor membrane pass occupies residues 284–304 (GLVLRLLRALRVLYVMRLARH). Topologically, residues 305–319 (SLGLRSLGLTMRRCA) are cytoplasmic. Residues 320–341 (REFGLLLLFLCVAMALFAPLVH) traverse the membrane as a helical segment. Residues 342–356 (LAERELGARRDFSSV) lie on the Extracellular side of the membrane. An intramembrane region (helical) is located at residues 357 to 368 (PASYWWAVISMT). Residues 369-374 (TVGYGD) carry the Selectivity filter motif. An intramembrane segment occupies 369–376 (TVGYGDMV). Topologically, residues 377 to 383 (PRSLPGQ) are extracellular. The helical transmembrane segment at 384–412 (VVALSSILSGILLMAFPVTSIFHTFSRSY) threads the bilayer. The Cytoplasmic portion of the chain corresponds to 413 to 466 (SELKEQQQRAASPEPALQEDSTHSATATEDSSQGPDSAGLADDSADALWVRAGR). Residues 416–466 (KEQQQRAASPEPALQEDSTHSATATEDSSQGPDSAGLADDSADALWVRAGR) form a disordered region. A compositionally biased stretch (polar residues) spans 435–447 (HSATATEDSSQGP). Low complexity predominate over residues 448-460 (DSAGLADDSADAL).

It belongs to the potassium channel family. G (TC 1.A.1.2) subfamily. Kv6.2/KCNG2 sub-subfamily. Heterodimer with KCNB1. As to expression, highly expressed in heart, liver, skeletal muscle, kidney and pancreas. Detected at low levels in brain, lung and placenta.

It localises to the cell membrane. Its function is as follows. Regulatory alpha-subunit of the voltage-gated potassium (Kv) channel which, when coassembled with KCNB1, can modulate the kinetics and conductance-voltage relationship. Modulates channel activity by shifting the threshold and the half-maximal activation to more negative values. Potassium channel subunit that does not form functional channels by itself. The chain is Voltage-gated potassium channel regulatory subunit KCNG2 from Homo sapiens (Human).